We begin with the raw amino-acid sequence, 206 residues long: Small ribosomal subunit protein uS4 (206 aa).

The segment at Asn-18 to Ser-46 is disordered. The region spanning Arg-94–Leu-154 is the S4 RNA-binding domain.

Belongs to the universal ribosomal protein uS4 family. In terms of assembly, part of the 30S ribosomal subunit. Contacts protein S5. The interaction surface between S4 and S5 is involved in control of translational fidelity.

One of the primary rRNA binding proteins, it binds directly to 16S rRNA where it nucleates assembly of the body of the 30S subunit. Its function is as follows. With S5 and S12 plays an important role in translational accuracy. The sequence is that of Small ribosomal subunit protein uS4 from Dinoroseobacter shibae (strain DSM 16493 / NCIMB 14021 / DFL 12).